The chain runs to 101 residues: NADH-quinone oxidoreductase subunit K (101 aa).

A run of 3 helical transmembrane segments spans residues 4-24, 30-50, and 61-81; these read LGYF…GIII, IVLL…FIAF, and IFVF…LAIL.

Belongs to the complex I subunit 4L family. NDH-1 is composed of 14 different subunits. Subunits NuoA, H, J, K, L, M, N constitute the membrane sector of the complex.

It localises to the cell inner membrane. The catalysed reaction is a quinone + NADH + 5 H(+)(in) = a quinol + NAD(+) + 4 H(+)(out). In terms of biological role, NDH-1 shuttles electrons from NADH, via FMN and iron-sulfur (Fe-S) centers, to quinones in the respiratory chain. The immediate electron acceptor for the enzyme in this species is believed to be ubiquinone. Couples the redox reaction to proton translocation (for every two electrons transferred, four hydrogen ions are translocated across the cytoplasmic membrane), and thus conserves the redox energy in a proton gradient. This chain is NADH-quinone oxidoreductase subunit K, found in Coxiella burnetii (strain CbuG_Q212) (Coxiella burnetii (strain Q212)).